We begin with the raw amino-acid sequence, 428 residues long: MEFLDLAPCATLRGTVALPGSKSISNRMLLLAALATGKTQVHGVLEADDTDRMLEALQQLGIRLAQQAHSRTFCIEGCDGRWPVRQADLFLGNAGTAFRPLTAALALAGGDYHLHGIARMHERPIGDLVEALQGLGAVIEYAGTPGYPPLHIHPGHVTPGSTTRVKGNVSSQFLSALLMALPLAGGGTVEVEGELISKPYVDLTLRLIERFGVTVGRDGYSRFTAEAGSHYRSPGAIHVEGDASSASYFLAAGALGGGPVRVTGVGRNSIQGDIRFADALAAMGAGIDMGDDWIEAQAPASGRLRAVTLDCNHIPDAAMTLAVAALFANGTTTLTNIASWRVKETDRIAAMATELGKLGALVETGHDFIRITPPDQLTPGAAIDTYDDHRMAMCFSLASLAVPVRINDPRCVAKTFPGYFDAFASLRA.

Lysine 22, serine 23, and arginine 27 together coordinate 3-phosphoshikimate. Lysine 22 is a phosphoenolpyruvate binding site. Phosphoenolpyruvate is bound by residues glycine 95 and arginine 123. Serine 170, serine 171, glutamine 172, serine 197, aspartate 316, and lysine 343 together coordinate 3-phosphoshikimate. Position 172 (glutamine 172) interacts with phosphoenolpyruvate. Residue aspartate 316 is the Proton acceptor of the active site. The phosphoenolpyruvate site is built by arginine 347, arginine 390, and lysine 414.

The protein belongs to the EPSP synthase family. As to quaternary structure, monomer.

Its subcellular location is the cytoplasm. It catalyses the reaction 3-phosphoshikimate + phosphoenolpyruvate = 5-O-(1-carboxyvinyl)-3-phosphoshikimate + phosphate. Its pathway is metabolic intermediate biosynthesis; chorismate biosynthesis; chorismate from D-erythrose 4-phosphate and phosphoenolpyruvate: step 6/7. Its function is as follows. Catalyzes the transfer of the enolpyruvyl moiety of phosphoenolpyruvate (PEP) to the 5-hydroxyl of shikimate-3-phosphate (S3P) to produce enolpyruvyl shikimate-3-phosphate and inorganic phosphate. This Laribacter hongkongensis (strain HLHK9) protein is 3-phosphoshikimate 1-carboxyvinyltransferase.